The primary structure comprises 144 residues: 3-hydroxyacyl-[acyl-carrier-protein] dehydratase FabZ (144 aa).

His-47 is a catalytic residue.

The protein belongs to the thioester dehydratase family. FabZ subfamily.

Its subcellular location is the cytoplasm. It carries out the reaction a (3R)-hydroxyacyl-[ACP] = a (2E)-enoyl-[ACP] + H2O. Its function is as follows. Involved in unsaturated fatty acids biosynthesis. Catalyzes the dehydration of short chain beta-hydroxyacyl-ACPs and long chain saturated and unsaturated beta-hydroxyacyl-ACPs. In Nitrosomonas eutropha (strain DSM 101675 / C91 / Nm57), this protein is 3-hydroxyacyl-[acyl-carrier-protein] dehydratase FabZ.